A 214-amino-acid chain; its full sequence is Cytochrome b (214 aa).

4 helical membrane passes run 31 to 51, 75 to 96, 111 to 131, and 176 to 196; these read FGSM…FLAI, WIMQ…YTHI, WLSG…GYVL, and FFAL…IHIL. Residues histidine 81 and histidine 95 each coordinate heme b. Positions 180 and 194 each coordinate heme b. An a ubiquinone-binding site is contributed by histidine 199.

This sequence belongs to the cytochrome b family. As to quaternary structure, the cytochrome bc1 complex contains 3 respiratory subunits (MT-CYB, CYC1 and UQCRFS1), 2 core proteins (UQCRC1 and UQCRC2) and probably 6 low-molecular weight proteins. Requires heme b as cofactor.

The protein resides in the mitochondrion inner membrane. Component of the ubiquinol-cytochrome c reductase complex (complex III or cytochrome b-c1 complex) that is part of the mitochondrial respiratory chain. The b-c1 complex mediates electron transfer from ubiquinol to cytochrome c. Contributes to the generation of a proton gradient across the mitochondrial membrane that is then used for ATP synthesis. The polypeptide is Cytochrome b (MT-CYB) (Lachesis muta muta (Bushmaster)).